Consider the following 772-residue polypeptide: Rho guanine nucleotide exchange factor 6 (772 aa).

In terms of domain architecture, Calponin-homology (CH) spans 1 to 111; sequence MNPEERVVTW…TLLAVNKATE (111 aa). The disordered stretch occupies residues 115–158; the sequence is SERPCGRSSSLSATTSSQTNPQAAVPSTTPEQQSEEKAAEMTEN. Low complexity predominate over residues 122 to 133; it reads SSSLSATTSSQT. Residue serine 126 is modified to Phosphoserine. Threonine 133 bears the Phosphothreonine mark. Residues 134-146 are compositionally biased toward polar residues; the sequence is NPQAAVPSTTPEQ. Residues 160–219 form the SH3 domain; that stretch reads SHQLIVKARFNFKQTNEDELSVCKGDIIYVTRVEEGGWWEGTLNGRTGWFPSNYVREIKP. The residue at position 225 (serine 225) is a Phosphoserine. The DH domain maps to 241-421; that stretch reads YYTVVLQNIL…KSLMGQCQDL (181 aa). The 106-residue stretch at 443–548 folds into the PH domain; that stretch reads DIKTLGNVIF…WMEQLNRLTK (106 aa). Serine 488 is modified (phosphoserine). A compositionally biased stretch (low complexity) spans 557-573; it reads SKTSSSSCSTHSSFSST. The disordered stretch occupies residues 557–581; sequence SKTSSSSCSTHSSFSSTGQPRGPLE. Residues serine 640 and serine 680 each carry the phosphoserine modification.

As to quaternary structure, interacts with PAK kinases through the SH3 domain. Interacts with GIT1. Interacts with PARVB. Component of cytoplasmic complexes, which also contain PXN, GIT1 and PAK1. Interacts with BIN2. Identified in a complex with BIN2 and GIT2. Interacts with PARVG; the guanine nucleotide exchange factor activity of ARHGEF6 is essential for PARVG-induced enhancement of cell spreading.

It is found in the cell projection. The protein localises to the lamellipodium. Its function is as follows. Acts as a RAC1 guanine nucleotide exchange factor (GEF). This chain is Rho guanine nucleotide exchange factor 6 (Arhgef6), found in Rattus norvegicus (Rat).